The following is a 450-amino-acid chain: UDP-N-acetylmuramoylalanine--D-glutamate ligase (450 aa).

Gly119–Thr125 provides a ligand contact to ATP.

Belongs to the MurCDEF family.

The protein resides in the cytoplasm. It carries out the reaction UDP-N-acetyl-alpha-D-muramoyl-L-alanine + D-glutamate + ATP = UDP-N-acetyl-alpha-D-muramoyl-L-alanyl-D-glutamate + ADP + phosphate + H(+). It participates in cell wall biogenesis; peptidoglycan biosynthesis. Cell wall formation. Catalyzes the addition of glutamate to the nucleotide precursor UDP-N-acetylmuramoyl-L-alanine (UMA). The protein is UDP-N-acetylmuramoylalanine--D-glutamate ligase of Streptococcus pneumoniae (strain ATCC BAA-255 / R6).